The sequence spans 174 residues: MKLNKIMLATVLAFGVSSLANAADQGHGKVTFTGSIIDAPCSIAPESADQTVEMGQISNVALKNGGKSAPRQFDIKLEQCDTSTLKTVTTTFDGKASAANPDLLGIIGTASGASIAITDMASNPIKLGTATAPQTLNDGNNTLRFAAYLQGDGASATVVPGDFTAVADFKLAYQ.

The first 22 residues, Met1 to Ala22, serve as a signal peptide directing secretion. A disulfide bridge links Cys41 with Cys80.

Belongs to the fimbrial protein family.

Its subcellular location is the fimbrium. Major structural component of mannose-resistant fimbriae of Serratia marcescens. The polypeptide is Fimbria A protein (smfA) (Serratia marcescens).